Reading from the N-terminus, the 177-residue chain is MIVAAGTKNPNKIKAVKDAYRLFGFPAEVVPVGRPAGTPPQPVGLEEVVKGAVARAKAALEAVPGAEHGVGVEAGAVHAGGAHLDITVAAIADRGGAVTLGFGPAFQIPTAFLPDVLKGVELGELAERYFKKPSVGYREGIIGVLTGRRVTRYQLNLAAVAMALVPRLPKNAKLYRT.

The protein belongs to the YjjX NTPase family. Homodimer. Requires Mg(2+) as cofactor. Mn(2+) serves as cofactor.

It carries out the reaction XTP + H2O = XDP + phosphate + H(+). The enzyme catalyses ITP + H2O = IDP + phosphate + H(+). Phosphatase that hydrolyzes non-canonical purine nucleotides such as XTP and ITP to their respective diphosphate derivatives. Probably excludes non-canonical purines from DNA/RNA precursor pool, thus preventing their incorporation into DNA/RNA and avoiding chromosomal lesions. The chain is Probable inosine/xanthosine triphosphatase from Pyrobaculum arsenaticum (strain DSM 13514 / JCM 11321 / PZ6).